The primary structure comprises 921 residues: Ribosome-releasing factor 2, mitochondrial (921 aa).

The transit peptide at 1-55 (MVSALLLRARQNGRAARCLDYPKVKCWALASLPKSSLEKPGFSQVRRFSVFHPQS) directs the protein to the mitochondrion. The 309-residue stretch at 60 to 368 (DLTRNIGIIA…SVVDLLPSPQ (309 aa)) folds into the tr-type G domain. GTP-binding positions include 69–76 (AHIDAGKT), 152–156 (DTPGH), and 206–209 (NKMD).

Belongs to the TRAFAC class translation factor GTPase superfamily. Classic translation factor GTPase family. EF-G/EF-2 subfamily.

Its subcellular location is the mitochondrion. Its function is as follows. Mitochondrial GTPase that mediates the disassembly of ribosomes from messenger RNA at the termination of mitochondrial protein biosynthesis. Not involved in the GTP-dependent ribosomal translocation step during translation elongation. The chain is Ribosome-releasing factor 2, mitochondrial (mef2) from Emericella nidulans (strain FGSC A4 / ATCC 38163 / CBS 112.46 / NRRL 194 / M139) (Aspergillus nidulans).